A 279-amino-acid polypeptide reads, in one-letter code: MAIRKLRPVTPASRYLSYPEFDEITKSEPEKSLLAPLKKSGGRNKAGRITSRHRGGGHKRFYRIIDFKRNKDNIPATVAAIEYDPNRSARIALLHYVDGEKRYILAPKGLKVGEQLLSGDKVEVKPGNTMPLKNIPLGTDIHNIEMKAGKGGQIVRSAGAYAVLAAKEGDYATLKLPSGEIRKVRIECRATIGGVGNADHENIVLGKAGRSRWLGVRPQTRGMAMNPVDHPMGGGEGKSKSGGGRKHPKSPWGQLAKGLKTRNKKKASSKLIVRGRKSK.

A disordered region spans residues 223 to 279; that stretch reads MAMNPVDHPMGGGEGKSKSGGGRKHPKSPWGQLAKGLKTRNKKKASSKLIVRGRKSK. The segment covering 232–242 has biased composition (gly residues); it reads MGGGEGKSKSG. A compositionally biased stretch (basic residues) spans 259–279; it reads LKTRNKKKASSKLIVRGRKSK.

This sequence belongs to the universal ribosomal protein uL2 family. As to quaternary structure, part of the 50S ribosomal subunit. Forms a bridge to the 30S subunit in the 70S ribosome.

Its function is as follows. One of the primary rRNA binding proteins. Required for association of the 30S and 50S subunits to form the 70S ribosome, for tRNA binding and peptide bond formation. It has been suggested to have peptidyltransferase activity; this is somewhat controversial. Makes several contacts with the 16S rRNA in the 70S ribosome. In Prosthecochloris aestuarii (strain DSM 271 / SK 413), this protein is Large ribosomal subunit protein uL2.